A 422-amino-acid chain; its full sequence is ATP phosphoribosyltransferase regulatory subunit (422 aa).

The protein belongs to the class-II aminoacyl-tRNA synthetase family. HisZ subfamily. As to quaternary structure, heteromultimer composed of HisG and HisZ subunits.

It localises to the cytoplasm. Its pathway is amino-acid biosynthesis; L-histidine biosynthesis; L-histidine from 5-phospho-alpha-D-ribose 1-diphosphate: step 1/9. Functionally, required for the first step of histidine biosynthesis. May allow the feedback regulation of ATP phosphoribosyltransferase activity by histidine. The chain is ATP phosphoribosyltransferase regulatory subunit from Clostridium botulinum (strain Langeland / NCTC 10281 / Type F).